A 78-amino-acid polypeptide reads, in one-letter code: Probable [Fe-S]-dependent transcriptional repressor (78 aa).

4 residues coordinate iron-sulfur cluster: C56, C61, C64, and C70.

The protein belongs to the FeoC family.

Functionally, may function as a transcriptional regulator that controls feoABC expression. The protein is Probable [Fe-S]-dependent transcriptional repressor of Salmonella heidelberg (strain SL476).